The primary structure comprises 445 residues: Guanosine nucleotide diphosphate dissociation inhibitor 1 (445 aa).

It belongs to the Rab GDI family. As to quaternary structure, interacts with the GDP-bound form of RABA5C (via C-terminus). In terms of tissue distribution, expressed in roots, rosette leaves, stems, floral buds and siliques.

Functionally, regulates the GDP/GTP exchange reaction of most RAB proteins by inhibiting the dissociation of GDP from them, and the subsequent binding of GTP. This is Guanosine nucleotide diphosphate dissociation inhibitor 1 (GDI1) from Arabidopsis thaliana (Mouse-ear cress).